A 263-amino-acid chain; its full sequence is Endonuclease 8 (263 aa).

P2 functions as the Schiff-base intermediate with DNA in the catalytic mechanism. Residue E3 is the Proton donor of the active site. The Proton donor; for beta-elimination activity role is filled by K53. DNA-binding residues include Q70, R125, and N169. An FPG-type zinc finger spans residues 229-263 (KVFHRDGEACERCGGIIEKTTLSSRPFYWCPHCQK). The Proton donor; for delta-elimination activity role is filled by R253.

It belongs to the FPG family. The cofactor is Zn(2+).

It catalyses the reaction 2'-deoxyribonucleotide-(2'-deoxyribose 5'-phosphate)-2'-deoxyribonucleotide-DNA = a 3'-end 2'-deoxyribonucleotide-(2,3-dehydro-2,3-deoxyribose 5'-phosphate)-DNA + a 5'-end 5'-phospho-2'-deoxyribonucleoside-DNA + H(+). Involved in base excision repair of DNA damaged by oxidation or by mutagenic agents. Acts as a DNA glycosylase that recognizes and removes damaged bases. Has a preference for oxidized pyrimidines, such as thymine glycol, 5,6-dihydrouracil and 5,6-dihydrothymine. Has AP (apurinic/apyrimidinic) lyase activity and introduces nicks in the DNA strand. Cleaves the DNA backbone by beta-delta elimination to generate a single-strand break at the site of the removed base with both 3'- and 5'-phosphates. This is Endonuclease 8 from Salmonella schwarzengrund (strain CVM19633).